Consider the following 746-residue polypeptide: Proline--tRNA ligase (746 aa).

A required for editing of incorrectly charged tRNA region spans residues 1-223; the sequence is MNNNTNGEII…NSNNNNNNNN (223 aa). Residues 181–201 are compositionally biased toward basic and acidic residues; it reads TSKARVDKKEDVQEEMAKNEE. Residues 181–226 form a disordered region; sequence TSKARVDKKEDVQEEMAKNEELQNNNNNNKNNSNSNNNNNNNNNHI. A compositionally biased stretch (low complexity) spans 204–224; that stretch reads NNNNNNKNNSNSNNNNNNNNN. R390 provides a ligand contact to L-proline. Residues 390-394, 401-405, and 475-477 each bind ATP; these read RWEFK, RTREF, and QAA. H480 lines the L-proline pocket. 512–514 lines the ATP pocket; it reads TTR.

This sequence belongs to the class-II aminoacyl-tRNA synthetase family. ProS type 3 subfamily. Homodimer.

The protein resides in the cytoplasm. The enzyme catalyses tRNA(Pro) + L-proline + ATP = L-prolyl-tRNA(Pro) + AMP + diphosphate. Its activity is regulated as follows. Inhibited by the quinazolinone-based compound febrifugine from the Chinese plant Dichroa febrifuga which is used to treat malaria-associated fever. Also inhibited by febrifugine derivatives such as halofuginone. Its function is as follows. Catalyzes the attachment of proline to tRNA(Pro) in a two-step reaction: proline is first activated by ATP to form Pro-AMP and then transferred to the acceptor end of tRNA(Pro). Functions in trans to edit the amino acid moiety from incorrectly charged Ala-tRNA(Pro). Has no activity on correctly charged Pro-tRNA(Pro) or Ala-tRNA(Ala). The chain is Proline--tRNA ligase from Plasmodium falciparum (isolate 3D7).